Reading from the N-terminus, the 142-residue chain is Complexin (142 aa).

Disordered stretches follow at residues 13–70 (QLSA…MRQD) and 83–105 (IVEA…PEEL). Positions 29–138 (GDDKEKAEEE…NELKTQIEGK (110 aa)) form a coiled coil. Positions 31-70 (DKEKAEEEERERQEAIKEAEDRRKEKHRKMEEEREKMRQD) are enriched in basic and acidic residues. Cys-139 carries the cysteine methyl ester modification. Cys-139 is lipidated: S-farnesyl cysteine. Positions 140–142 (VMQ) are cleaved as a propeptide — removed in mature form.

Belongs to the complexin/synaphin family. As to quaternary structure, binds to the SNARE core complex containing Snap25, synaptobrevin and Syx1A.

It is found in the membrane. Its function is as follows. Positively regulates a late step in synaptic vesicle exocytosis. This is Complexin (cpx) from Drosophila melanogaster (Fruit fly).